A 211-amino-acid chain; its full sequence is Superoxide dismutase [Fe] (211 aa).

Residues histidine 34, histidine 85, aspartate 171, and histidine 175 each coordinate Fe cation.

Belongs to the iron/manganese superoxide dismutase family. In terms of assembly, homotetramer. Requires Fe cation as cofactor.

It is found in the cytoplasm. The catalysed reaction is 2 superoxide + 2 H(+) = H2O2 + O2. In terms of biological role, destroys superoxide anion radicals which are normally produced within the cells and which are toxic to biological systems. This chain is Superoxide dismutase [Fe] (sod), found in Saccharolobus solfataricus (strain ATCC 35092 / DSM 1617 / JCM 11322 / P2) (Sulfolobus solfataricus).